Consider the following 377-residue polypeptide: Nitric oxide reductase FlRd-NAD(+) reductase (377 aa).

It belongs to the FAD-dependent oxidoreductase family. The cofactor is FAD.

It is found in the cytoplasm. It catalyses the reaction 2 reduced [nitric oxide reductase rubredoxin domain] + NAD(+) + H(+) = 2 oxidized [nitric oxide reductase rubredoxin domain] + NADH. Its pathway is nitrogen metabolism; nitric oxide reduction. Its function is as follows. One of at least two accessory proteins for anaerobic nitric oxide (NO) reductase. Reduces the rubredoxin moiety of NO reductase. This Escherichia coli (strain SE11) protein is Nitric oxide reductase FlRd-NAD(+) reductase.